The chain runs to 165 residues: Transcription antitermination protein NusB (165 aa).

This sequence belongs to the NusB family.

Functionally, involved in transcription antitermination. Required for transcription of ribosomal RNA (rRNA) genes. Binds specifically to the boxA antiterminator sequence of the ribosomal RNA (rrn) operons. The protein is Transcription antitermination protein NusB of Bradyrhizobium diazoefficiens (strain JCM 10833 / BCRC 13528 / IAM 13628 / NBRC 14792 / USDA 110).